Reading from the N-terminus, the 249-residue chain is Secreted flagellin C (249 aa).

In terms of processing, the secreted form is about 1 kDa larger than the whole cell lysate form, presumably due to post-translational modification. A 22 kDa form is also found in the secreted fraction, probably resulting from proteolysis.

Its subcellular location is the secreted. It is found in the host cell surface. Plays a role in virulence. This Campylobacter jejuni subsp. jejuni serotype O:2 (strain ATCC 700819 / NCTC 11168) protein is Secreted flagellin C (flaC).